A 354-amino-acid polypeptide reads, in one-letter code: DNA integrity scanning protein DisA (354 aa).

One can recognise a DAC domain in the interval 6–144 (DDELKKILKI…GDIKYVLRDS (139 aa)). Residues G73, L91, and 104–108 (TRHRT) contribute to the ATP site.

Belongs to the DisA family. Homooctamer. Mg(2+) serves as cofactor.

The catalysed reaction is 2 ATP = 3',3'-c-di-AMP + 2 diphosphate. In terms of biological role, participates in a DNA-damage check-point that is active prior to asymmetric division when DNA is damaged. DisA forms globular foci that rapidly scan along the chromosomes during sporulation, searching for lesions. When a lesion is present, DisA pauses at the lesion site. This triggers a cellular response that culminates in a temporary block in sporulation initiation. Also has diadenylate cyclase activity, catalyzing the condensation of 2 ATP molecules into cyclic di-AMP (c-di-AMP). c-di-AMP acts as a signaling molecule that couples DNA integrity with progression of sporulation. The rise in c-di-AMP level generated by DisA while scanning the chromosome, operates as a positive signal that advances sporulation; upon encountering a lesion, the DisA focus arrests at the damaged site and halts c-di-AMP synthesis. This chain is DNA integrity scanning protein DisA, found in Clostridium perfringens (strain 13 / Type A).